We begin with the raw amino-acid sequence, 268 residues long: Ethylene-responsive transcription factor ERN1 (268 aa).

Residues 1–21 (MEIQFQQPNMQNQKAGISVTN) are compositionally biased toward polar residues. The tract at residues 1 to 36 (MEIQFQQPNMQNQKAGISVTNKGGKFKGRNRNSNNT) is disordered. A DNA-binding region (AP2/ERF) is located at residues 38–95 (KFVGVRQRPSGRWVAEIKDTTQKIRMWLGTFETAEEAARAYDEAACLLRGSNTRTNFI). The disordered stretch occupies residues 114-154 (NRKGDKKQEDGAVASAPSNSKTTISNTSTITSNDDNKESTL). Low complexity predominate over residues 131 to 146 (SNSKTTISNTSTITSN).

This sequence belongs to the AP2/ERF transcription factor family. ERF subfamily. In terms of tissue distribution, expressed in roots, root hairs and leaves. Expressed in root epidermis and root hairs.

It is found in the nucleus. Transcription factor involved in symbiotic nodule signaling in response to rhizobial Nod factors (NFs). Binds to the GCC-box (NF-responsive box) of ENOD11 promoter. Acts as a transcriptional activator of NF-responsive box-containing target gene promoters in root hairs. Functions as a transcriptional regulator required for root infection by symbiotic rhizobia, infection thread (IT) formation and maintenance, and nodule development. Necessary for NF-induced gene expression and spontaneous nodulation activated by CCAMK. Functions downstream of CCAMK to activate nodulation gene expression. Involved in early stages of root nodule development. Functions redundantly with ERN2. Is essential with ERN2 for the initiation of root hair infection, and nodule organogenesis and development. Required for accurate expression of the NF signaling genes ENOD11 and ENOD12. The sequence is that of Ethylene-responsive transcription factor ERN1 from Medicago truncatula (Barrel medic).